Reading from the N-terminus, the 580-residue chain is N(6)-adenosine-methyltransferase catalytic subunit METTL3 (580 aa).

The interval 1–70 (MSDTWSSIQA…PKPSTASAVP (70 aa)) is disordered. N-acetylserine; alternate is present on Ser-2. Ser-2 carries the phosphoserine; alternate modification. The segment covering 28 to 37 (QDSGHLDLRN) has biased composition (basic and acidic residues). Phosphoserine occurs at positions 43, 48, and 50. Residues Lys-177, Lys-211, Lys-212, and Lys-215 each participate in a glycyl lysine isopeptide (Lys-Gly) (interchain with G-Cter in SUMO1) cross-link. A disordered region spans residues 198–219 (LNSSASEPAKEPAKKSRKHAAS). The Nuclear localization signal signature appears at 210–215 (AKKSRK). Residues Ser-219 and Ser-243 each carry the phosphoserine modification. At Thr-348 the chain carries Phosphothreonine. Residue Ser-350 is modified to Phosphoserine. S-adenosyl-L-methionine contacts are provided by residues 377 to 378 (DI) and Asp-395. The gate loop 1 stretch occupies residues 396-410 (PPWDIHMELPYGTLT). 2 interaction with METTL14 regions span residues 450–454 (ERVDE) and 464–480 (QRII…NHGK). The interphase loop stretch occupies residues 462-479 (QLQRIIRTGRTGHWLNHG). A positively charged region required for RNA-binding region spans residues 465–478 (RIIRTGRTGHWLNH). Residues 507–515 (VRSTSHKPD) form a gate loop 2 region. Residues Lys-513, 536–539 (RPHN), and 549–550 (NQ) contribute to the S-adenosyl-L-methionine site.

The protein belongs to the MT-A70-like family. Heterodimer; heterodimerizes with METTL14 to form an antiparallel heterodimer that constitutes an active methyltransferase. Component of the WMM complex, a N6-methyltransferase complex composed of a catalytic subcomplex, named MAC, and of an associated subcomplex, named MACOM. The MAC subcomplex is composed of METTL3 and METTL14. The MACOM subcomplex is composed of WTAP, ZC3H13, CBLL1/HAKAI, VIRMA, and, in some cases of RBM15 (RBM15 or RBM15B). Interacts with NCBP1/CBP80. Interacts with EIF4E. Interacts with EIF3B. Sumoylation inhibits the N6-adenosine-methyltransferase activity. Sumoylation does not affect subcellular location or interaction with METTL14. Desumoylated by SENP1. Widely expressed at low level. Expressed in spleen, thymus, prostate, testis, ovary, small intestine, colon and peripheral blood leukocytes.

It localises to the nucleus. It is found in the nucleus speckle. Its subcellular location is the cytoplasm. The catalysed reaction is an adenosine in mRNA + S-adenosyl-L-methionine = an N(6)-methyladenosine in mRNA + S-adenosyl-L-homocysteine + H(+). Its activity is regulated as follows. Methyltransferase activity is regulated by miRNAs via a sequence pairing mechanism. Methyltransferase activity is inhibited by sumoylation. Its function is as follows. The METTL3-METTL14 heterodimer forms a N6-methyltransferase complex that methylates adenosine residues at the N(6) position of some RNAs and regulates various processes such as the circadian clock, differentiation of embryonic and hematopoietic stem cells, cortical neurogenesis, response to DNA damage, differentiation of T-cells and primary miRNA processing. In the heterodimer formed with METTL14, METTL3 constitutes the catalytic core. N6-methyladenosine (m6A), which takes place at the 5'-[AG]GAC-3' consensus sites of some mRNAs, plays a role in mRNA stability, processing, translation efficiency and editing. M6A acts as a key regulator of mRNA stability: methylation is completed upon the release of mRNA into the nucleoplasm and promotes mRNA destabilization and degradation. In embryonic stem cells (ESCs), m6A methylation of mRNAs encoding key naive pluripotency-promoting transcripts results in transcript destabilization, promoting differentiation of ESCs. M6A regulates the length of the circadian clock: acts as an early pace-setter in the circadian loop by putting mRNA production on a fast-track for facilitating nuclear processing, thereby providing an early point of control in setting the dynamics of the feedback loop. M6A also regulates circadian regulation of hepatic lipid metabolism. M6A regulates spermatogonial differentiation and meiosis and is essential for male fertility and spermatogenesis. Also required for oogenesis. Involved in the response to DNA damage: in response to ultraviolet irradiation, METTL3 rapidly catalyzes the formation of m6A on poly(A) transcripts at DNA damage sites, leading to the recruitment of POLK to DNA damage sites. M6A is also required for T-cell homeostasis and differentiation: m6A methylation of transcripts of SOCS family members (SOCS1, SOCS3 and CISH) in naive T-cells promotes mRNA destabilization and degradation, promoting T-cell differentiation. Inhibits the type I interferon response by mediating m6A methylation of IFNB. M6A also takes place in other RNA molecules, such as primary miRNA (pri-miRNAs). Mediates m6A methylation of Xist RNA, thereby participating in random X inactivation: m6A methylation of Xist leads to target YTHDC1 reader on Xist and promote transcription repression activity of Xist. M6A also regulates cortical neurogenesis: m6A methylation of transcripts related to transcription factors, neural stem cells, the cell cycle and neuronal differentiation during brain development promotes their destabilization and decay, promoting differentiation of radial glial cells. METTL3 mediates methylation of pri-miRNAs, marking them for recognition and processing by DGCR8. Acts as a positive regulator of mRNA translation independently of the methyltransferase activity: promotes translation by interacting with the translation initiation machinery in the cytoplasm. Its overexpression in a number of cancer cells suggests that it may participate in cancer cell proliferation by promoting mRNA translation. During human coronavirus SARS-CoV-2 infection, adds m6A modifications in SARS-CoV-2 RNA leading to decreased RIGI binding and subsequently dampening the sensing and activation of innate immune responses. The sequence is that of N(6)-adenosine-methyltransferase catalytic subunit METTL3 from Homo sapiens (Human).